The primary structure comprises 592 residues: Condensin-2 complex subunit H2 (592 aa).

2 disordered regions span residues 89 to 116 and 261 to 285; these read NKKRDKQGSSSDGNQEQAPSGSEGDGCE and EAPSEGRMLRPRPAVQPVSEEPKQL. The segment covering 96-108 has biased composition (polar residues); the sequence is GSSSDGNQEQAPS.

This sequence belongs to the CND2 H2 (condensin-2 subunit 2) family. Component of the condensin-2 complex, which contains the smc2 and smc4 heterodimer, and three non SMC subunits, ncapg2, ncaph2 and ncapd3 that probably regulate the complex.

Its subcellular location is the nucleus. In terms of biological role, regulatory subunit of the condensin-2 complex, a complex that seems to provide chromosomes with an additional level of organization and rigidity and in establishing mitotic chromosome architecture. This chain is Condensin-2 complex subunit H2 (ncaph2), found in Danio rerio (Zebrafish).